The primary structure comprises 611 residues: Probable cysteine desulfurase 1 (611 aa).

The interval 1 to 208 (MRATQLYAAS…HEMVDVFDIQ (208 aa)) is cargo-loading domain. Lys-428 bears the N6-(pyridoxal phosphate)lysine mark. Catalysis depends on Cys-566, which acts as the Cysteine persulfide intermediate.

It belongs to the class-V pyridoxal-phosphate-dependent aminotransferase family. Csd subfamily. As to quaternary structure, there are 1-2 copies of this protein in each type 2A encapsulin shell. Pyridoxal 5'-phosphate is required as a cofactor.

The protein localises to the encapsulin nanocompartment. It catalyses the reaction (sulfur carrier)-H + L-cysteine = (sulfur carrier)-SH + L-alanine. Cargo protein of a type 2A encapsulin nanocompartment involved in sulfur metabolism. Cysteine desulfurases mobilize the sulfur from L-cysteine to yield L-alanine, an essential step in sulfur metabolism for biosynthesis of a variety of sulfur-containing biomolecules. The polypeptide is Probable cysteine desulfurase 1 (Mycobacterium leprae (strain TN)).